The primary structure comprises 384 residues: Cell division protein FtsZ (384 aa).

Residues 20-24 (GGGSN), 107-109 (GTG), Glu138, Arg142, and Asn186 each bind GTP.

The protein belongs to the FtsZ family. As to quaternary structure, homodimer. Polymerizes to form a dynamic ring structure in a strictly GTP-dependent manner. Interacts directly with several other division proteins.

The protein localises to the cytoplasm. Its function is as follows. Essential cell division protein that forms a contractile ring structure (Z ring) at the future cell division site. The regulation of the ring assembly controls the timing and the location of cell division. One of the functions of the FtsZ ring is to recruit other cell division proteins to the septum to produce a new cell wall between the dividing cells. Binds GTP and shows GTPase activity. The chain is Cell division protein FtsZ from Buchnera aphidicola subsp. Acyrthosiphon pisum (strain APS) (Acyrthosiphon pisum symbiotic bacterium).